The primary structure comprises 76 residues: uncharacterized protein (76 aa).

An HTH cro/C1-type domain is found at 15–69 (VRIVRKEQNLRQDELAGVAGVGLRFIVDLEAGKPTAQIGKVLQVLQTLGCSIDIL). Positions 26–45 (QDELAGVAGVGLRFIVDLEA) form a DNA-binding region, H-T-H motif.

This is an uncharacterized protein from Sinorhizobium fredii (strain NBRC 101917 / NGR234).